The sequence spans 555 residues: AP2-like ethylene-responsive transcription factor ANT (555 aa).

Disordered regions lie at residues 34-56 (GGRE…SVPP) and 199-231 (LSMS…NHQQ). Composition is skewed to low complexity over residues 41–53 (SSST…SSSS), 199–208 (LSMSPGSQSS), and 218–231 (QNQN…NHQQ). DNA-binding regions (AP2/ERF) lie at residues 283–349 (QYRG…TNFS) and 385–443 (IYRG…TNFD).

The protein belongs to the AP2/ERF transcription factor family. AP2 subfamily. In terms of assembly, interacts with ANL2, HDG2 and HDG10, and possibly with GL2, HDG3, HDG8, ATML1 and PDF2. As to expression, mostly expressed in developing flowers. Also present in mature flowers, siliques and seedlings, but not in mature roots, leaves and stems. Expressed in ovules and in vegetative and floral primordia.

The protein resides in the nucleus. Transcription activator that recognizes and binds to the DNA consensus sequence 5'-CAC[AG]N[AT]TNCCNANG-3'. Required for the initiation and growth of ovules integumenta, and for the development of female gametophyte. Plays a critical role in the development of gynoecium marginal tissues (e.g. stigma, style and septa), and in the fusion of carpels and of medial ridges leading to ovule primordia. Also involved in organs initiation and development, including floral organs. Maintains the meristematic competence of cells and consequently sustains expression of cell cycle regulators during organogenesis, thus controlling the final size of each organ by controlling their cell number. Regulates INO autoinduction and expression pattern. As ANT promotes petal cell identity and mediates down-regulation of AG in flower whorl 2, it functions as a class A homeotic gene. The chain is AP2-like ethylene-responsive transcription factor ANT from Arabidopsis thaliana (Mouse-ear cress).